Consider the following 428-residue polypeptide: MLDIRLFRNEPEKVKSKIELRGDDPKVVDQVLELDEQRRELISKTEEMKAKRNKVSEEIAQKKRNKEDADDVIAEMRHLGDEIKDIDNQLNEVDNKIRDILIRIPNLINEDVPQGASDEENVEVKKWGTPRDFEFEPKAHWDLVEELKMADFERAAKVSGARFVYLTKDGALLERALMNYMLTKHTTQHGYTEMMTPQLVNADTMFGTGQLPKFEEDLFKVEKEGLYTIPTAEVPLTNFYRDEIIQPGVLPELFTAQTACFRSEAGSAGRDTRGLIRLHQFDKVEMVRIVQPEDSWDALEEMTQNAEAILEELGLPYRRVILCTGDIGFSASKTYDLEVWLPSYNDYKEISSCSNCTDFQARRANIRFKRDAASKPELVHTLNGSGLAVGRTFAAIVENYQNEDGTLTIPEALVPFMGGKTKIEKPIK.

Thr231–Glu233 serves as a coordination point for L-serine. Residue Arg262–Glu264 participates in ATP binding. Position 285 (Glu285) interacts with L-serine. Glu349–Ser352 lines the ATP pocket. Ser385 is an L-serine binding site.

Belongs to the class-II aminoacyl-tRNA synthetase family. Type-1 seryl-tRNA synthetase subfamily. As to quaternary structure, homodimer. The tRNA molecule binds across the dimer.

Its subcellular location is the cytoplasm. It carries out the reaction tRNA(Ser) + L-serine + ATP = L-seryl-tRNA(Ser) + AMP + diphosphate + H(+). It catalyses the reaction tRNA(Sec) + L-serine + ATP = L-seryl-tRNA(Sec) + AMP + diphosphate + H(+). It participates in aminoacyl-tRNA biosynthesis; selenocysteinyl-tRNA(Sec) biosynthesis; L-seryl-tRNA(Sec) from L-serine and tRNA(Sec): step 1/1. Functionally, catalyzes the attachment of serine to tRNA(Ser). Is also able to aminoacylate tRNA(Sec) with serine, to form the misacylated tRNA L-seryl-tRNA(Sec), which will be further converted into selenocysteinyl-tRNA(Sec). This Staphylococcus epidermidis (strain ATCC 35984 / DSM 28319 / BCRC 17069 / CCUG 31568 / BM 3577 / RP62A) protein is Serine--tRNA ligase.